Here is a 327-residue protein sequence, read N- to C-terminus: Flotillin-like protein FloA (327 aa).

2 helical membrane passes run 6–26 (VLFF…FTFV) and 28–48 (IMLW…TLVG).

The protein belongs to the flotillin-like FloA family. As to quaternary structure, homooligomerizes.

It is found in the cell membrane. It localises to the membrane raft. Its function is as follows. Found in functional membrane microdomains (FMM) that may be equivalent to eukaryotic membrane rafts. FMMs are highly dynamic and increase in number as cells age. Flotillins are thought to be important factors in membrane fluidity. This is Flotillin-like protein FloA from Priestia megaterium (strain DSM 319 / IMG 1521) (Bacillus megaterium).